Reading from the N-terminus, the 360-residue chain is Photosystem II protein D1 (360 aa).

The next 3 helical transmembrane spans lie at 29–46 (YVGW…TATT), 118–133 (HFLL…QWEL), and 142–156 (WICV…AATA). His118 contributes to the chlorophyll a binding site. Position 126 (Tyr126) interacts with pheophytin a. Positions 170 and 189 each coordinate [CaMn4O5] cluster. Residues 197 to 218 (FHMLGVAGVFGGSLFSAMHGSL) traverse the membrane as a helical segment. His198 provides a ligand contact to chlorophyll a. A quinone is bound by residues His215 and 264–265 (SF). His215 contacts Fe cation. Residue His272 coordinates Fe cation. A helical transmembrane segment spans residues 274–288 (FLGAWPVIGIWFTAM). 4 residues coordinate [CaMn4O5] cluster: His332, Glu333, Asp342, and Ala344. Positions 345–360 (SGEQAPVALTAPAING) are excised as a propeptide.

Belongs to the reaction center PufL/M/PsbA/D family. PSII is composed of 1 copy each of membrane proteins PsbA, PsbB, PsbC, PsbD, PsbE, PsbF, PsbH, PsbI, PsbJ, PsbK, PsbL, PsbM, PsbT, PsbX, PsbY, PsbZ, Psb30/Ycf12, peripheral proteins PsbO, CyanoQ (PsbQ), PsbU, PsbV and a large number of cofactors. It forms dimeric complexes. It depends on The D1/D2 heterodimer binds P680, chlorophylls that are the primary electron donor of PSII, and subsequent electron acceptors. It shares a non-heme iron and each subunit binds pheophytin, quinone, additional chlorophylls, carotenoids and lipids. D1 provides most of the ligands for the Mn4-Ca-O5 cluster of the oxygen-evolving complex (OEC). There is also a Cl(-1) ion associated with D1 and D2, which is required for oxygen evolution. The PSII complex binds additional chlorophylls, carotenoids and specific lipids. as a cofactor. In terms of processing, tyr-161 forms a radical intermediate that is referred to as redox-active TyrZ, YZ or Y-Z. Post-translationally, C-terminally processed by CtpA; processing is essential to allow assembly of the oxygen-evolving complex and thus photosynthetic growth.

The protein resides in the cellular thylakoid membrane. The catalysed reaction is 2 a plastoquinone + 4 hnu + 2 H2O = 2 a plastoquinol + O2. Photosystem II (PSII) is a light-driven water:plastoquinone oxidoreductase that uses light energy to abstract electrons from H(2)O, generating O(2) and a proton gradient subsequently used for ATP formation. It consists of a core antenna complex that captures photons, and an electron transfer chain that converts photonic excitation into a charge separation. The D1/D2 (PsbA/PsbD) reaction center heterodimer binds P680, the primary electron donor of PSII as well as several subsequent electron acceptors. The chain is Photosystem II protein D1 from Microcystis aeruginosa.